Reading from the N-terminus, the 131-residue chain is ATP synthase lipid-binding protein, mitochondrial (131 aa).

The N-terminal 56 residues, 1 to 56 (MLSAARLIAPAARSAIFSNAAVVRPLAAVSTQTQLVPAAPAQLSAVRSFQTTSVTK), are a transit peptide targeting the mitochondrion. A helical membrane pass occupies residues 72–92 (VGVAGSGAGIGTVFGSLIIGY). Position 99 is an N6,N6,N6-trimethyllysine (Lys99). The helical transmembrane segment at 107–127 (ILGFALSEAMGLFCLMMAFLL) threads the bilayer.

Belongs to the ATPase C chain family. As to quaternary structure, F-type ATPases have 2 components, CF(1) - the catalytic core - and CF(0) - the membrane proton channel. CF(1) has five subunits: alpha(3), beta(3), gamma(1), delta(1), epsilon(1). CF(0) has three main subunits: a, b and c. Post-translationally, trimethylated by ATPSCKMT at Lys-99. Methylation may be required for proper incorporation of the C subunit into the ATP synthase complex and mitochondrial respiration.

Its subcellular location is the mitochondrion membrane. Its function is as follows. Mitochondrial membrane ATP synthase (F(1)F(0) ATP synthase or Complex V) produces ATP from ADP in the presence of a proton gradient across the membrane which is generated by electron transport complexes of the respiratory chain. F-type ATPases consist of two structural domains, F(1) - containing the extramembraneous catalytic core and F(0) - containing the membrane proton channel, linked together by a central stalk and a peripheral stalk. During catalysis, ATP synthesis in the catalytic domain of F(1) is coupled via a rotary mechanism of the central stalk subunits to proton translocation. Part of the complex F(0) domain. A homomeric c-ring of probably 10 subunits is part of the complex rotary element. The polypeptide is ATP synthase lipid-binding protein, mitochondrial (Manduca sexta (Tobacco hawkmoth)).